A 143-amino-acid polypeptide reads, in one-letter code: uncharacterized protein (143 aa).

An N-terminal signal peptide occupies residues 1–32 (MITNLRRRTAMAAAGLGAALGLGILLVPTVDA).

This sequence to M.tuberculosis Rv1269c.

This is an uncharacterized protein from Mycobacterium tuberculosis (strain CDC 1551 / Oshkosh).